Reading from the N-terminus, the 443-residue chain is COP9 signalosome complex subunit 2 (443 aa).

Positions 1-275 (MSDMEDDFMC…DESGSPRRTT (275 aa)) are mediates interaction with NIF3L1. In terms of domain architecture, PCI spans 254–416 (AHTDFFEAFK…QLLELDHQKR (163 aa)).

It belongs to the CSN2 family. As to quaternary structure, component of the CSN complex, composed of COPS1/GPS1, COPS2, COPS3, COPS4, COPS5, COPS6, COPS7 (COPS7A or COPS7B), COPS8 and COPS9 isoform 1. In the complex, it probably interacts directly with COPS1, COPS4, COPS5, COPS6 and COPS7 (COPS7A or COPS7B). Specifically interacts with the ligand binding domain of the thyroid receptor (TR). Does not require the presence of thyroid hormone for its interaction. Interacts with CUL1 and CUL2. Interacts with IRF8/ICSBP1 and with nuclear receptors NR2F1 and NR0B1. Interacts with NIF3L1. Phosphorylated by CK2 and PKD kinases.

The protein localises to the cytoplasm. It is found in the nucleus. Its function is as follows. Essential component of the COP9 signalosome complex (CSN), a complex involved in various cellular and developmental processes. The CSN complex is an essential regulator of the ubiquitin (Ubl) conjugation pathway by mediating the deneddylation of the cullin subunits of SCF-type E3 ligase complexes, leading to decrease the Ubl ligase activity of SCF-type complexes such as SCF, CSA or DDB2. The complex is also involved in phosphorylation of p53/TP53, c-jun/JUN, IkappaBalpha/NFKBIA, ITPK1 and IRF8/ICSBP, possibly via its association with CK2 and PKD kinases. CSN-dependent phosphorylation of TP53 and JUN promotes and protects degradation by the Ubl system, respectively. Involved in early stage of neuronal differentiation via its interaction with NIF3L1. This is COP9 signalosome complex subunit 2 (COPS2) from Homo sapiens (Human).